The sequence spans 393 residues: MTAPTTRKDLMIVNMGPQHPSMHGVLRLIVTLDGEDVVDCEPILGYLHRGMEKIAENRTIIQYLPYVTRWDYLATMFTEAITINGPEQLGNIQVPKRASYIRVIMLELSRIASHLLWLGPFMADIGAQTPFFYIFRERELIYDLFEAATGMRMMHNYFRIGGVAADLPYGWIDKCLDFCDYFLTGVAEYQKLITRNPIFLERVEGVGIIGRDEAVNWGLSGPMLRASGIEWDLRKVDHYESYDEFDWQVQWQREGDSLARYLVRIGEMTESIKIIQQALEGIPGGPYENLEMRRFDRLKDPEWNDFEYRFISKKPSPTFELSKQELYVRVEAPKGELGIFLIGDQSVFPWRWKIRPPGFINLQILPQLVKRMKLADIMTILGSIDIIMGEVDR.

It belongs to the complex I 49 kDa subunit family. As to quaternary structure, NDH is composed of at least 16 different subunits, 5 of which are encoded in the nucleus.

It localises to the plastid. The protein localises to the chloroplast thylakoid membrane. It carries out the reaction a plastoquinone + NADH + (n+1) H(+)(in) = a plastoquinol + NAD(+) + n H(+)(out). The enzyme catalyses a plastoquinone + NADPH + (n+1) H(+)(in) = a plastoquinol + NADP(+) + n H(+)(out). In terms of biological role, NDH shuttles electrons from NAD(P)H:plastoquinone, via FMN and iron-sulfur (Fe-S) centers, to quinones in the photosynthetic chain and possibly in a chloroplast respiratory chain. The immediate electron acceptor for the enzyme in this species is believed to be plastoquinone. Couples the redox reaction to proton translocation, and thus conserves the redox energy in a proton gradient. The chain is NAD(P)H-quinone oxidoreductase subunit H, chloroplastic from Solanum tuberosum (Potato).